Consider the following 670-residue polypeptide: Probable potassium transport system protein Kup 1 (670 aa).

13 helical membrane passes run G14–Y34, L58–L78, W101–P121, L147–G167, F175–F195, G196–P216, A220–S240, V252–L272, L294–I314, L345–F365, A374–L394, V403–S423, and F427–I447.

The protein belongs to the HAK/KUP transporter (TC 2.A.72) family.

It localises to the cell membrane. It carries out the reaction K(+)(in) + H(+)(in) = K(+)(out) + H(+)(out). Its function is as follows. Transport of potassium into the cell. Likely operates as a K(+):H(+) symporter. The chain is Probable potassium transport system protein Kup 1 from Lactococcus lactis subsp. lactis (strain IL1403) (Streptococcus lactis).